Reading from the N-terminus, the 518-residue chain is Putative cytochrome P450 CYP13A6 (518 aa).

Residue Cys-463 coordinates heme.

Belongs to the cytochrome P450 family. Heme serves as cofactor.

Functionally, cytochromes P450 are a group of heme-thiolate monooxygenases. They oxidize a variety of structurally unrelated compounds, including steroids, fatty acids, and xenobiotics. The polypeptide is Putative cytochrome P450 CYP13A6 (cyp-13A6) (Caenorhabditis elegans).